A 981-amino-acid polypeptide reads, in one-letter code: Beta-glucuronidase (981 aa).

Glu500 acts as the Nucleophile in catalysis. 5 residues coordinate Mg(2+): Asn561, Trp562, Ile563, Ser581, and Glu583.

It belongs to the glycosyl hydrolase 2 family.

It is found in the periplasm. The enzyme catalyses a beta-D-glucuronoside + H2O = D-glucuronate + an alcohol. Beta-glucuronidase involved in ulvan degradation. Ulvan is the main polysaccharide component of the Ulvales (green seaweed) cell wall. It is composed of disaccharide building blocks comprising 3-sulfated rhamnose (Rha3S) linked to D-glucuronic acid (GlcA), L-iduronic acid (IduA), or D-xylose (Xyl). Beta-glucuronidase removes GlcA side chains present on some O2 residues of Rha3S. Can remove the GlcA side chains from polymeric ulvan or from smaller oligomers. The protein is Beta-glucuronidase of Formosa agariphila (strain DSM 15362 / KCTC 12365 / LMG 23005 / KMM 3901 / M-2Alg 35-1).